The primary structure comprises 222 residues: Oligoribonuclease (222 aa).

The disordered stretch occupies residues 19–38 (PMASSSSTGKQEESVNGSLE). The span at 21–35 (ASSSSTGKQEESVNG) shows a compositional bias: polar residues. The 165-residue stretch at 46–210 (LVWIDLEMTG…DDIRESIKEL (165 aa)) folds into the Exonuclease domain. Residue H167 is part of the active site.

It belongs to the oligoribonuclease family.

3'-to-5' exoribonuclease specific for small oligoribonucleotides. In Arabidopsis thaliana (Mouse-ear cress), this protein is Oligoribonuclease.